The primary structure comprises 48 residues: uncharacterized protein (48 aa).

This is an uncharacterized protein from Mus musculus domesticus (western European house mouse).